A 322-amino-acid chain; its full sequence is Mas-related G-protein coupled receptor member X3 (322 aa).

At M1–T31 the chain is on the extracellular side. A helical membrane pass occupies residues G32–L52. Topologically, residues G53 to A60 are cytoplasmic. The chain crosses the membrane as a helical span at residues V61–I81. The Extracellular segment spans residues C82–K96. A helical transmembrane segment spans residues I97–S117. The Cytoplasmic portion of the chain corresponds to T118 to S140. Residues V141 to C161 traverse the membrane as a helical segment. Residues D162 to D177 are Extracellular-facing. The chain crosses the membrane as a helical span at residues F178–L198. The Cytoplasmic portion of the chain corresponds to L199 to R213. Residues L214–I234 form a helical membrane-spanning segment. At Q235–H254 the chain is on the extracellular side. The chain crosses the membrane as a helical span at residues L255–V275. Topologically, residues G276 to Q322 are cytoplasmic.

Belongs to the G-protein coupled receptor 1 family. Mas subfamily. As to expression, uniquely localized in a subset of small dorsal root and trigeminal sensory neurons.

It localises to the cell membrane. Orphan receptor. Probably involved in the function of nociceptive neurons. May regulate nociceptor function and/or development, including the sensation or modulation of pain. Potently activated by enkephalins. This chain is Mas-related G-protein coupled receptor member X3 (MRGPRX3), found in Homo sapiens (Human).